Reading from the N-terminus, the 218-residue chain is Sulfite reductase, assimilatory-type (218 aa).

[4Fe-4S] cluster-binding residues include Cys-91, Cys-97, Cys-131, and Cys-135. Residue Cys-135 participates in siroheme binding.

This enzyme catalyzes the 6-electron reduction of sulfite to sulfide. This is one of several activities required for the biosynthesis of L-cysteine from sulfate. This chain is Sulfite reductase, assimilatory-type, found in Nitratidesulfovibrio vulgaris (strain ATCC 29579 / DSM 644 / CCUG 34227 / NCIMB 8303 / VKM B-1760 / Hildenborough) (Desulfovibrio vulgaris).